Reading from the N-terminus, the 214-residue chain is Membrane antigen containing repeating peptides (214 aa).

Tandem repeats lie at residues 1–14 (QETSAKLADTEETL), 15–28 (QETSAKLADTEETL), 29–42 (QETSAKLADTEETL), and 43–56 (QETSAKLADTEETL). Residues 1 to 31 (QETSAKLADTEETLQETSAKLADTEETLQET) are disordered. The tract at residues 1 to 56 (QETSAKLADTEETLQETSAKLADTEETLQETSAKLADTEETLQETSAKLADTEETL) is 4 X 14 AA tandem repeats. Positions 180 to 214 (CSLHPTPRRLGDVSNRENSIENKTRSASRLSGRLF) are disordered. Basic and acidic residues predominate over residues 188–203 (RLGDVSNRENSIENKT).

The protein localises to the membrane. The polypeptide is Membrane antigen containing repeating peptides (Leishmania major).